A 101-amino-acid polypeptide reads, in one-letter code: Protein S100-A3 (101 aa).

Ala2 is modified (N-acetylalanine). 2 consecutive EF-hand domains span residues 12–47 (IVCT…TWTP) and 50–85 (FREC…LCLY). Ca(2+) is bound by residues Lys28 and Glu33. A disulfide bridge connects residues Cys30 and Cys68. Arg51 carries the post-translational modification Citrulline; by PAD3. 5 residues coordinate Ca(2+): Asp63, Asn65, Asp67, Glu69, and Glu74. Cys81 and Cys99 are joined by a disulfide. The Zn(2+) site is built by Cys83, Cys86, His87, and Cys93.

The protein belongs to the S-100 family. Homodimer and homotetramer for the citrullinated form. In terms of processing, more than half of the arginine residues undergo citrullination by PAD1 and PAD2. Arg-51 is specifically citrullinated by PAD3 and promotes tetramerization. As to expression, skin specific, specifically expressed at the inner endocuticle of hair fibers.

The protein resides in the cytoplasm. Functionally, binds both calcium and zinc. May be involved in calcium-dependent cuticle cell differentiation, hair shaft and hair cuticular barrier formation. The polypeptide is Protein S100-A3 (S100A3) (Homo sapiens (Human)).